A 1642-amino-acid chain; its full sequence is Cholesterol transporter ABCA5 (1642 aa).

A helical transmembrane segment spans residues Ser32–Met52. Asn86 carries N-linked (GlcNAc...) asparagine glycosylation. The next 6 membrane-spanning stretches (helical) occupy residues Val220 to Ile240, Leu264 to Ile284, Ile297 to Leu317, Gly328 to Ile348, Leu355 to Met375, and Leu396 to Tyr416. An N-linked (GlcNAc...) asparagine glycan is attached at Asn458. The region spanning Ile478–Tyr713 is the ABC transporter 1 domain. Gly514–Ser521 is a binding site for ATP. The next 2 helical transmembrane spans lie at Leu866–Phe886 and Val967–Ile987. An N-linked (GlcNAc...) asparagine glycan is attached at Asn996. The next 6 helical transmembrane spans lie at Leu1021 to Met1041, Val1071 to Phe1091, Phe1102 to Ile1122, Phe1139 to Gly1159, Ala1169 to Ile1189, and Leu1207 to Tyr1227. The tract at residues Lys1249–Val1268 is disordered. A compositionally biased stretch (acidic residues) spans Pro1259–Val1268. Residues Ile1290–Lys1533 enclose the ABC transporter 2 domain. Gly1333 to Ser1340 provides a ligand contact to ATP.

Belongs to the ABC transporter superfamily. ABCA family. N-glycosylated. Ubiquitously expressed. Highly expressed in testis, skeletal muscle, kidney, liver and placenta. Expressed in both the epithelial and mesenchymal compartments, present within the outer root sheath (ORS) of the hair follicle as well as dermal sheath. Expressed in multiple regions of the brain, including the hippocampus, superior frontal and inferior temporal cortices. Strongly expressed in neurons and moderately in microglia, with only weak expression in astrocytes and oligodendrocytes.

The protein resides in the golgi apparatus membrane. It localises to the lysosome membrane. The protein localises to the late endosome membrane. Its subcellular location is the cell membrane. It carries out the reaction cholesterol(in) + ATP + H2O = cholesterol(out) + ADP + phosphate + H(+). In terms of biological role, cholesterol efflux transporter in macrophages that is responsible for APOAI/high-density lipoproteins (HDL) formation at the plasma membrane under high cholesterol levels and participates in reverse cholesterol transport. May play a role in the processing of autolysosomes. The sequence is that of Cholesterol transporter ABCA5 from Homo sapiens (Human).